Here is a 1482-residue protein sequence, read N- to C-terminus: Cystic fibrosis transmembrane conductance regulator (1482 aa).

The Cytoplasmic portion of the chain corresponds to Met1–Phe77. The helical transmembrane segment at Phe78–Gln98 threads the bilayer. One can recognise an ABC transmembrane type-1 1 domain in the interval Phe81–Leu365. At Pro99–Tyr122 the chain is on the extracellular side. The helical transmembrane segment at Leu123–His146 threads the bilayer. At His147–Leu195 the chain is on the cytoplasmic side. A helical transmembrane segment spans residues Ala196–Trp216. Topologically, residues Glu217–Ser222 are extracellular. A helical transmembrane segment spans residues Ala223–Met243. Over Met244–Lys298 the chain is Cytoplasmic. Residues Ala299–Phe319 traverse the membrane as a helical segment. Residues Leu320–Thr339 lie on the Extracellular side of the membrane. The helical transmembrane segment at Ile340–Val358 threads the bilayer. Residues Gln359–Ser859 are Cytoplasmic-facing. ATP contacts are provided by residues Trp401, Ser434, Gly458–Thr465, and Gln493. Residues Asn423–Gly646 form the ABC transporter 1 domain. Residue Cys524 is the site of S-palmitoyl cysteine attachment. Phosphoserine occurs at positions 549 and 660. A disordered R region region spans residues Thr654–Glu832. Phosphoserine; by PKA is present on Ser670. At Ser686 the chain carries Phosphoserine. Lys688 participates in a covalent cross-link: Glycyl lysine isopeptide (Lys-Gly) (interchain with G-Cter in ubiquitin). Residues Ser700 and Ser712 each carry the phosphoserine modification. The residue at position 717 (Thr717) is a Phosphothreonine. Ser737, Ser768, Ser791, Ser796, and Ser814 each carry phosphoserine. The helical transmembrane segment at Leu860–Val880 threads the bilayer. The region spanning Leu860–Ser1156 is the ABC transmembrane type-1 2 domain. At Val881–Ile919 the chain is on the extracellular side. N-linked (GlcNAc...) asparagine glycans are attached at residues Asn895 and Asn901. Residues Tyr920–His940 form a discontinuously helical membrane-spanning segment. Over Thr941–Thr991 the chain is Cytoplasmic. Residues Ile992–Leu1012 traverse the membrane as a helical segment. Residues Lys1013–Pro1014 lie on the Extracellular side of the membrane. Residues Tyr1015 to Leu1035 traverse the membrane as a helical segment. Topologically, residues His1036–Thr1096 are cytoplasmic. Residues Leu1097–Phe1117 traverse the membrane as a helical segment. At Ile1118–Gly1131 the chain is on the extracellular side. A helical membrane pass occupies residues Ile1132–Ile1152. The Cytoplasmic segment spans residues Asp1153–Leu1482. Residues Met1212 to Pro1445 form the ABC transporter 2 domain. ATP is bound by residues Tyr1221 and Gly1246 to Ser1253. An interaction with GORASP2 region spans residues Arg1388–Leu1482. A lipid anchor (S-palmitoyl cysteine) is attached at Cys1397. A compositionally biased stretch (basic residues) spans His1454 to Ser1464. The interval His1454 to Leu1482 is disordered. Ser1458 bears the Phosphoserine mark. The segment covering Glu1472–Leu1482 has biased composition (acidic residues). Residues Thr1480 to Leu1482 carry the PDZ-binding motif.

This sequence belongs to the ABC transporter superfamily. ABCC family. CFTR transporter (TC 3.A.1.202) subfamily. As to quaternary structure, monomer; does not require oligomerization for channel activity. May form oligomers in the membrane. Interacts with SLC26A3, SLC26A6 and NHERF1. Interacts with SHANK2. Interacts with MYO6. Interacts (via C-terminus) with GOPC (via PDZ domain); this promotes CFTR internalization and thereby decreases channel activity. Interacts with SLC4A7 through NHERF1. Found in a complex with MYO5B and RAB11A. Interacts with ANO1. Interacts with SLC26A8. Interacts with AHCYL1; the interaction increases CFTR activity. Interacts with CSE1L. The core-glycosylated form interacts with GORASP2 (via PDZ GRASP-type 1 domain) in respone to ER stress. Interacts with MARCHF2; the interaction leads to CFTR ubiqtuitination and degradation. Interacts with ADGRG2. In terms of processing, N-glycosylated. Post-translationally, phosphorylated; cAMP treatment promotes phosphorylation and activates the channel. Dephosphorylation decreases the ATPase activity (in vitro). Phosphorylation at PKA sites activates the channel. Phosphorylation at PKC sites enhances the response to phosphorylation by PKA. Phosphorylated by AMPK; this inhibits channel activity. Ubiquitinated, leading to its degradation in the lysosome. Deubiquitination by USP10 in early endosomes enhances its endocytic recycling to the cell membrane. Ubiquitinated by RNF185 during ER stress. Ubiquitinated by MARCHF2.

The protein resides in the apical cell membrane. The protein localises to the early endosome membrane. It localises to the cell membrane. Its subcellular location is the recycling endosome membrane. It is found in the endoplasmic reticulum membrane. The protein resides in the nucleus. It catalyses the reaction ATP + H2O + closed Cl(-) channel = ADP + phosphate + open Cl(-) channel.. The catalysed reaction is chloride(in) = chloride(out). It carries out the reaction hydrogencarbonate(in) = hydrogencarbonate(out). The enzyme catalyses ATP + H2O = ADP + phosphate + H(+). In terms of biological role, epithelial ion channel that plays an important role in the regulation of epithelial ion and water transport and fluid homeostasis. Mediates the transport of chloride ions across the cell membrane. Possesses an intrinsic ATPase activity and utilizes ATP to gate its channel; the passive flow of anions through the channel is gated by cycles of ATP binding and hydrolysis by the ATP-binding domains. The ion channel is also permeable to HCO(3)(-); selectivity depends on the extracellular chloride concentration. Exerts its function also by modulating the activity of other ion channels and transporters. Contributes to the regulation of the pH and the ion content of the epithelial fluid layer. Modulates the activity of the epithelial sodium channel (ENaC) complex, in part by regulating the cell surface expression of the ENaC complex. May regulate bicarbonate secretion and salvage in epithelial cells by regulating the transporter SLC4A7. Can inhibit the chloride channel activity of ANO1. Plays a role in the chloride and bicarbonate homeostasis during sperm epididymal maturation and capacitation. This chain is Cystic fibrosis transmembrane conductance regulator, found in Sus scrofa (Pig).